A 212-amino-acid chain; its full sequence is Phosphoribosylformylglycinamidine synthase subunit PurQ (212 aa).

Residues 2–212 enclose the Glutamine amidotransferase type-1 domain; that stretch reads RIAVLKFPGT…WLGLISWLRR (211 aa). The active-site Nucleophile is Cys-85. Catalysis depends on residues His-183, Glu-185, and His-191.

In terms of assembly, part of the FGAM synthase complex composed of 1 PurL, 1 PurQ and 2 PurS subunits.

Its subcellular location is the cytoplasm. It catalyses the reaction N(2)-formyl-N(1)-(5-phospho-beta-D-ribosyl)glycinamide + L-glutamine + ATP + H2O = 2-formamido-N(1)-(5-O-phospho-beta-D-ribosyl)acetamidine + L-glutamate + ADP + phosphate + H(+). The catalysed reaction is L-glutamine + H2O = L-glutamate + NH4(+). It functions in the pathway purine metabolism; IMP biosynthesis via de novo pathway; 5-amino-1-(5-phospho-D-ribosyl)imidazole from N(2)-formyl-N(1)-(5-phospho-D-ribosyl)glycinamide: step 1/2. Functionally, part of the phosphoribosylformylglycinamidine synthase complex involved in the purines biosynthetic pathway. Catalyzes the ATP-dependent conversion of formylglycinamide ribonucleotide (FGAR) and glutamine to yield formylglycinamidine ribonucleotide (FGAM) and glutamate. The FGAM synthase complex is composed of three subunits. PurQ produces an ammonia molecule by converting glutamine to glutamate. PurL transfers the ammonia molecule to FGAR to form FGAM in an ATP-dependent manner. PurS interacts with PurQ and PurL and is thought to assist in the transfer of the ammonia molecule from PurQ to PurL. This Pyrobaculum aerophilum (strain ATCC 51768 / DSM 7523 / JCM 9630 / CIP 104966 / NBRC 100827 / IM2) protein is Phosphoribosylformylglycinamidine synthase subunit PurQ.